The chain runs to 175 residues: Protein FMP23, mitochondrial (175 aa).

A mitochondrion-targeting transit peptide spans Met1–Phe38.

The protein localises to the mitochondrion. May be involved in mitochondrial iron or copper homeostatis. This Saccharomyces cerevisiae (strain ATCC 204508 / S288c) (Baker's yeast) protein is Protein FMP23, mitochondrial (FMP23).